Consider the following 87-residue polypeptide: Small ribosomal subunit protein uS17 (87 aa).

This sequence belongs to the universal ribosomal protein uS17 family. Part of the 30S ribosomal subunit.

Its function is as follows. One of the primary rRNA binding proteins, it binds specifically to the 5'-end of 16S ribosomal RNA. The protein is Small ribosomal subunit protein uS17 of Staphylococcus haemolyticus (strain JCSC1435).